The sequence spans 328 residues: Malate dehydrogenase (328 aa).

11-17 is an NAD(+) binding site; sequence GAAGQIG. 2 residues coordinate substrate: Arg-94 and Arg-100. NAD(+)-binding positions include Asn-107, Gln-114, and 131–133; that span reads VGN. The substrate site is built by Asn-133 and Arg-164. Residue His-189 is the Proton acceptor of the active site.

This sequence belongs to the LDH/MDH superfamily. MDH type 2 family.

The enzyme catalyses (S)-malate + NAD(+) = oxaloacetate + NADH + H(+). Catalyzes the reversible oxidation of malate to oxaloacetate. The protein is Malate dehydrogenase of Acinetobacter baumannii (strain AB0057).